Consider the following 222-residue polypeptide: Glutathione transferase GST 23 (222 aa).

In terms of domain architecture, GST N-terminal spans 4-83 (KGVKVLGMWA…YIDEVWKGGY (80 aa)). Glutathione is bound by residues serine 14, lysine 41, valine 55, and 67 to 68 (ES). Residues 89–220 (DPYERAQARF…ANKARREQLL (132 aa)) form the GST C-terminal domain.

Belongs to the GST superfamily.

The enzyme catalyses RX + glutathione = an S-substituted glutathione + a halide anion + H(+). Its function is as follows. Involved in multiple disease resistance (MDR). This Zea mays (Maize) protein is Glutathione transferase GST 23.